The sequence spans 90 residues: Large ribosomal subunit protein eL34 (90 aa).

Residues 38–65 (ARCGRPLGGVPRGRPPRVRRLSKTAKRP) form a disordered region. Positions 51-62 (RPPRVRRLSKTA) are enriched in basic residues.

Belongs to the eukaryotic ribosomal protein eL34 family.

This chain is Large ribosomal subunit protein eL34 (rpl34e), found in Aeropyrum pernix (strain ATCC 700893 / DSM 11879 / JCM 9820 / NBRC 100138 / K1).